The chain runs to 276 residues: Nuclear egress protein 2 (276 aa).

Topologically, residues 1–253 (MAGMGKPYGG…LFRAPRPGPP (253 aa)) are perinuclear space. Over residues 212–225 (HSSGAPGPGVAASG) the composition is skewed to low complexity. Positions 212 to 237 (HSSGAPGPGVAASGPPAPPGRGPARP) are disordered. A helical membrane pass occupies residues 254–274 (ALLLLAAGLFLGAAIWWAVGA). Residues 275–276 (RL) are Nuclear-facing.

Belongs to the herpesviridae NEC2 protein family. Forms a heterohexameric complex with NEC1. In terms of processing, phosphorylated.

Its subcellular location is the host nucleus inner membrane. Its function is as follows. Plays an essential role in virion nuclear egress, the first step of virion release from infected cell. Within the host nucleus, NEC1 interacts with the newly formed capsid through the vertexes and directs it to the inner nuclear membrane by associating with NEC2. Induces the budding of the capsid at the inner nuclear membrane as well as its envelopment into the perinuclear space. There, the NEC1/NEC2 complex promotes the fusion of the enveloped capsid with the outer nuclear membrane and the subsequent release of the viral capsid into the cytoplasm where it will reach the secondary budding sites in the host Golgi or trans-Golgi network. This chain is Nuclear egress protein 2, found in Homo sapiens (Human).